The primary structure comprises 249 residues: Probable phosphatase Spea_1436 (249 aa).

Zn(2+) is bound by residues histidine 8, histidine 10, histidine 16, histidine 41, glutamate 74, histidine 102, histidine 132, aspartate 193, and histidine 195.

It belongs to the PHP family. The cofactor is Zn(2+).

In Shewanella pealeana (strain ATCC 700345 / ANG-SQ1), this protein is Probable phosphatase Spea_1436.